Here is a 476-residue protein sequence, read N- to C-terminus: GTPase Der (476 aa).

EngA-type G domains lie at 3 to 167 (FTVA…GEDM) and 205 to 380 (LRVA…KTWN). Residues 9 to 16 (GRPNVGKS), 56 to 60 (DTAGL), 119 to 122 (NKSE), 211 to 218 (GRPNAGKS), 258 to 262 (DTAGM), and 323 to 326 (NKWD) contribute to the GTP site. The KH-like domain maps to 381 to 465 (RRISTAKLNR…PIRVHYRGSD (85 aa)).

Belongs to the TRAFAC class TrmE-Era-EngA-EngB-Septin-like GTPase superfamily. EngA (Der) GTPase family. As to quaternary structure, associates with the 50S ribosomal subunit.

In terms of biological role, GTPase that plays an essential role in the late steps of ribosome biogenesis. This is GTPase Der from Agrobacterium fabrum (strain C58 / ATCC 33970) (Agrobacterium tumefaciens (strain C58)).